The sequence spans 201 residues: Glycerol-3-phosphate acyltransferase (201 aa).

The next 5 membrane-spanning stretches (helical) occupy residues 10 to 30 (MLIG…GLIL), 60 to 80 (LAAA…LIAA), 86 to 106 (AAIA…WIGF), 116 to 136 (LGVL…AWIV), and 166 to 186 (ALAA…RANI).

It belongs to the PlsY family. As to quaternary structure, probably interacts with PlsX.

Its subcellular location is the cell inner membrane. It carries out the reaction an acyl phosphate + sn-glycerol 3-phosphate = a 1-acyl-sn-glycero-3-phosphate + phosphate. It participates in lipid metabolism; phospholipid metabolism. Functionally, catalyzes the transfer of an acyl group from acyl-phosphate (acyl-PO(4)) to glycerol-3-phosphate (G3P) to form lysophosphatidic acid (LPA). This enzyme utilizes acyl-phosphate as fatty acyl donor, but not acyl-CoA or acyl-ACP. This Brucella melitensis biotype 2 (strain ATCC 23457) protein is Glycerol-3-phosphate acyltransferase.